We begin with the raw amino-acid sequence, 68 residues long: Large ribosomal subunit protein bL35 (68 aa).

This sequence belongs to the bacterial ribosomal protein bL35 family.

This is Large ribosomal subunit protein bL35 from Aster yellows witches'-broom phytoplasma (strain AYWB).